A 78-amino-acid chain; its full sequence is Biotin synthase auxiliary protein (78 aa).

The protein belongs to the BsaP family. The cofactor is iron-sulfur cluster.

In terms of biological role, required for the activity of the biotin synthase BioB. In Mycolicibacterium smegmatis (strain ATCC 700084 / mc(2)155) (Mycobacterium smegmatis), this protein is Biotin synthase auxiliary protein.